The following is a 557-amino-acid chain: Formate--tetrahydrofolate ligase (557 aa).

67–74 (TPAGEGKS) lines the ATP pocket.

This sequence belongs to the formate--tetrahydrofolate ligase family.

It carries out the reaction (6S)-5,6,7,8-tetrahydrofolate + formate + ATP = (6R)-10-formyltetrahydrofolate + ADP + phosphate. The protein operates within one-carbon metabolism; tetrahydrofolate interconversion. The sequence is that of Formate--tetrahydrofolate ligase from Latilactobacillus sakei subsp. sakei (strain 23K) (Lactobacillus sakei subsp. sakei).